The chain runs to 118 residues: Ribonuclease P protein component (118 aa).

This sequence belongs to the RnpA family. As to quaternary structure, consists of a catalytic RNA component (M1 or rnpB) and a protein subunit.

It catalyses the reaction Endonucleolytic cleavage of RNA, removing 5'-extranucleotides from tRNA precursor.. In terms of biological role, RNaseP catalyzes the removal of the 5'-leader sequence from pre-tRNA to produce the mature 5'-terminus. It can also cleave other RNA substrates such as 4.5S RNA. The protein component plays an auxiliary but essential role in vivo by binding to the 5'-leader sequence and broadening the substrate specificity of the ribozyme. This Vibrio cholerae serotype O1 (strain ATCC 39541 / Classical Ogawa 395 / O395) protein is Ribonuclease P protein component.